We begin with the raw amino-acid sequence, 764 residues long: Thyrotropin receptor (764 aa).

An N-terminal signal peptide occupies residues 1 to 21 (MRPTPLLRLALLLVLPSSLWG). The Extracellular portion of the chain corresponds to 22–413 (ERCPSPPCEC…EFNPCEDIMG (392 aa)). A disulfide bridge links Cys-31 with Cys-41. The LRR 1 repeat unit spans residues 51-74 (PPSTQTLKFIETHLKTIPSRAFSN). 2 N-linked (GlcNAc...) asparagine glycosylation sites follow: Asn-77 and Asn-99. LRR repeat units lie at residues 125–150 (LPLL…IYST), 152–174 (VFFI…AFQG), 176–199 (SNET…AFNG), 201–223 (KLDA…AFAG), and 225–248 (YSGP…GLEH). Residues Asn-177 and Asn-198 are each glycosylated (N-linked (GlcNAc...) asparagine). Asn-302 carries an N-linked (GlcNAc...) asparagine glycan. A Sulfotyrosine modification is found at Tyr-385. A helical transmembrane segment spans residues 414-441 (YKFLRIVVWFVSLLALLGNVFVLVILLT). The Cytoplasmic segment spans residues 442–450 (SHYKLTVPR). The chain crosses the membrane as a helical span at residues 451-473 (FLMCNLAFADFCMGLYLLLIASV). Over 474–494 (DLYTQSEYYNHAIDWQTGPGC) the chain is Extracellular. Cys-494 and Cys-569 are oxidised to a cystine. The helical transmembrane segment at 495–517 (NTAGFFTVFASELSVYTLTVITL) threads the bilayer. Over 518 to 537 (ERWYAITFAMHLDRKIRLWH) the chain is Cytoplasmic. The helical transmembrane segment at 538–560 (AYVIMLGGWVCCFLLALLPLVGI) threads the bilayer. Residues 561-580 (SSYAKVSICLPMDTETPLAL) are Extracellular-facing. The chain crosses the membrane as a helical span at residues 581-602 (AYIILVLLLNIIAFIIVCACYV). Topologically, residues 603–625 (KIYITVRNPHYNPGDKDTRIAKR) are cytoplasmic. Residues 626–649 (MAVLIFTDFMCMAPISFYALSALM) traverse the membrane as a helical segment. Topologically, residues 650 to 660 (NKPLITVTNSK) are extracellular. Residues 661-682 (ILLVLFYPLNSCANPFLYAIFT) traverse the membrane as a helical segment. At 683-764 (KAFQRDVFML…TSKEYKQTVL (82 aa)) the chain is on the cytoplasmic side. Positions 762–764 (TVL) match the PDZ-binding motif.

Belongs to the G-protein coupled receptor 1 family. FSH/LSH/TSH subfamily. As to quaternary structure, interacts with heterodimer GPHA2:GPHB5; this interaction stimulates cAMP production. Interacts (via the PDZ-binding motif) with SCRIB; regulates TSHR trafficking and function. Post-translationally, glycosylated. In terms of processing, sulfated. Sulfation on Tyr-385 plays a role in thyrotropin receptor binding and activation.

Its subcellular location is the cell membrane. The protein localises to the basolateral cell membrane. Its function is as follows. Receptor for the thyroid-stimulating hormone (TSH) or thyrotropin. Also acts as a receptor for the heterodimeric glycoprotein hormone (GPHA2:GPHB5) or thyrostimulin. The activity of this receptor is mediated by G proteins which activate adenylate cyclase. Plays a central role in controlling thyroid cell metabolism. This chain is Thyrotropin receptor (TSHR), found in Ovis aries (Sheep).